We begin with the raw amino-acid sequence, 312 residues long: tRNA (adenine(58)-N(1))-methyltransferase catalytic subunit trmt61a (312 aa).

S-adenosyl-L-methionine contacts are provided by residues Leu-85, 112-114 (SGS), Glu-133, Arg-138, 161-162 (DA), and Asp-183.

Belongs to the class I-like SAM-binding methyltransferase superfamily. TRM61 family. In terms of assembly, heterotetramer; composed of two copies of trmt6 and two copies of trmt61a.

Its subcellular location is the nucleus. It carries out the reaction adenosine(58) in tRNA + S-adenosyl-L-methionine = N(1)-methyladenosine(58) in tRNA + S-adenosyl-L-homocysteine + H(+). Inhibited by calcium and magnesium ions and spermidine. Enhanced by KCl, NaCl and NH(4)Cl in concentrations from 0.1-0.25 M. Concentrations of more than 0.3 M are inhibitory. Functionally, catalytic subunit of tRNA (adenine-N(1)-)-methyltransferase, which catalyzes the formation of N(1)-methyladenine at position 58 (m1A58) in initiator methionyl-tRNA. The chain is tRNA (adenine(58)-N(1))-methyltransferase catalytic subunit trmt61a (trmt61a) from Dictyostelium discoideum (Social amoeba).